The sequence spans 493 residues: Glycerol kinase (493 aa).

T13 contributes to the ADP binding site. ATP contacts are provided by T13, T14, and S15. Sn-glycerol 3-phosphate is bound at residue T13. R17 contributes to the ADP binding site. Sn-glycerol 3-phosphate is bound by residues R83, E84, Y135, and D244. Glycerol is bound by residues R83, E84, Y135, D244, and Q245. 2 residues coordinate ADP: T266 and G309. ATP is bound by residues T266, G309, Q313, and G410. ADP contacts are provided by G410 and N414.

It belongs to the FGGY kinase family.

The catalysed reaction is glycerol + ATP = sn-glycerol 3-phosphate + ADP + H(+). It participates in polyol metabolism; glycerol degradation via glycerol kinase pathway; sn-glycerol 3-phosphate from glycerol: step 1/1. Inhibited by fructose 1,6-bisphosphate (FBP). Functionally, key enzyme in the regulation of glycerol uptake and metabolism. Catalyzes the phosphorylation of glycerol to yield sn-glycerol 3-phosphate. The protein is Glycerol kinase of Shewanella pealeana (strain ATCC 700345 / ANG-SQ1).